The following is a 247-amino-acid chain: Orotidine 5'-phosphate decarboxylase (247 aa).

Substrate contacts are provided by residues aspartate 22, lysine 44, 71 to 80 (DLKFHDIPNT), threonine 131, arginine 192, glutamine 201, glycine 221, and arginine 222. The active-site Proton donor is lysine 73.

Belongs to the OMP decarboxylase family. Type 1 subfamily. Homodimer.

It catalyses the reaction orotidine 5'-phosphate + H(+) = UMP + CO2. It participates in pyrimidine metabolism; UMP biosynthesis via de novo pathway; UMP from orotate: step 2/2. Catalyzes the decarboxylation of orotidine 5'-monophosphate (OMP) to uridine 5'-monophosphate (UMP). The protein is Orotidine 5'-phosphate decarboxylase of Pectobacterium carotovorum subsp. carotovorum (strain PC1).